Consider the following 148-residue polypeptide: UPF0178 protein SUN_1096 (148 aa).

Belongs to the UPF0178 family.

This chain is UPF0178 protein SUN_1096, found in Sulfurovum sp. (strain NBC37-1).